We begin with the raw amino-acid sequence, 565 residues long: MELEYESKRPLYIPYAGPILLEFPLLNKGSAFTEEERADFNLAGLLPEAVETIEEQAERAWRQYQEFKHDIEKHVYLRNIQDTNETLFYRLLDGHLNEMMPIIYTPTVGEACEHFSDIYRRARGLFISYPNRANIDDMLQNATKQNVKVIVVTDGERILGLGDQGIGGMGIPIGKLALYTACGGISPAYTLPVVLDVGTNNPQRLNDPLYMGWRHPRITDDEYYAFVDEFIQAVKRRWPNVLLQFEDFAQKNATPLLNRYRDEICSFNDDIQGTAAVAIGSLIAASRAAGTQLRDQTVAFLGAGSAGCGIAEQIIAQMKSEGLSEEEARARVFMVDRFGLLTDKLPNLLDFQSKLVQKSELLADWDCNSDAISLLEVVRNAKPTIMIGVSGQPGLFTEEIIREMYKHCARPIVMPLSNPTSRVEARPEDIIRWTEGSALVATGSPFSPVHYQDKVFPIAQCNNSYIFPGIGLGVLASGANRITDGMLMAASRALADCSPLANNGEGALLPDLSDIQQVSKRIALDVGKAAQLQGVAVVTSADALQKAIDHNFWQPQYRSYKRTSF.

Tyr104 serves as the catalytic Proton donor. An NAD(+)-binding site is contributed by Arg157. The Proton acceptor role is filled by Lys175. Residues Glu246, Asp247, and Asp270 each coordinate a divalent metal cation. NAD(+) is bound by residues Asp270 and Asn418.

Belongs to the malic enzymes family. Homotetramer. It depends on Mg(2+) as a cofactor. Mn(2+) is required as a cofactor.

The enzyme catalyses (S)-malate + NAD(+) = pyruvate + CO2 + NADH. The catalysed reaction is oxaloacetate + H(+) = pyruvate + CO2. In Pectobacterium atrosepticum (strain SCRI 1043 / ATCC BAA-672) (Erwinia carotovora subsp. atroseptica), this protein is NAD-dependent malic enzyme.